Here is a 500-residue protein sequence, read N- to C-terminus: NAD(P)H-quinone oxidoreductase chain 4, chloroplastic (500 aa).

The next 14 helical transmembrane spans lie at 3–23, 37–57, 84–104, 111–129, 134–154, 167–187, 208–228, 242–262, 272–292, 305–325, 330–350, 386–406, 416–436, and 462–482; these read FFPW…VIFF, ICIC…HFQF, GLSI…TLAA, SRLF…IGSF, LLLF…LLSI, FILY…GVGL, ALEI…SPII, HYST…YGLI, AHSI…IYAA, IAYS…SITD, GAIL…FLAG, LALP…GIIT, ILIT…SLSM, and LFVS…PDFV.

This sequence belongs to the complex I subunit 4 family.

Its subcellular location is the plastid. The protein resides in the chloroplast thylakoid membrane. The catalysed reaction is a plastoquinone + NADH + (n+1) H(+)(in) = a plastoquinol + NAD(+) + n H(+)(out). The enzyme catalyses a plastoquinone + NADPH + (n+1) H(+)(in) = a plastoquinol + NADP(+) + n H(+)(out). The chain is NAD(P)H-quinone oxidoreductase chain 4, chloroplastic from Panax ginseng (Korean ginseng).